A 367-amino-acid chain; its full sequence is Testis-specific serine/threonine-protein kinase 1 (367 aa).

The 261-residue stretch at 12 to 272 (YLLGINLGEG…IDEILSHCWM (261 aa)) folds into the Protein kinase domain. Residues 18–26 (LGEGSYAKV) and Lys41 contribute to the ATP site. Residue Asp136 is the Proton acceptor of the active site. Residue Thr174 is modified to Phosphothreonine. The interval 276–367 (ARGSPSVAIN…PQQPPETRAQ (92 aa)) is disordered. The span at 303–314 (GSDKKSATKLEP) shows a compositional bias: basic and acidic residues.

Belongs to the protein kinase superfamily. CAMK Ser/Thr protein kinase family. As to quaternary structure, interacts with TSSK2. Interacts with HSP90; this interaction stabilizes TSSK1. Mg(2+) is required as a cofactor. Autophosphorylated. In terms of processing, ubiquitinated; HSP90 activity negatively regulates ubiquitination and degradation. Testis-specific. Present in sperm (at protein level).

It localises to the cytoplasm. The protein localises to the cytoplasmic vesicle. It is found in the secretory vesicle. Its subcellular location is the acrosome. The protein resides in the cell projection. It localises to the cilium. The protein localises to the flagellum. The catalysed reaction is L-seryl-[protein] + ATP = O-phospho-L-seryl-[protein] + ADP + H(+). It carries out the reaction L-threonyl-[protein] + ATP = O-phospho-L-threonyl-[protein] + ADP + H(+). Kinase activity is specifically inhibited by 2 classes of compounds: biphenyl compounds (1,1'-(biphenyl-4,4'-diyl)bis(2,2-dihydroxyethanone)) and 1,2,7-trialky-1H-imidazo[4,5-g]quinoxalin-6-one. Activated by phosphorylation on Thr-174 and potentially by autophosphorylation. Testis-specific serine/threonine-protein kinase required during spermatid development. Phosphorylates 'Ser-288' of TSKS. Involved in the late stages of spermatogenesis, during the reconstruction of the cytoplasm. During spermatogenesis, required for the transformation of a ring-shaped structure around the base of the flagellum originating from the chromatoid body. This is Testis-specific serine/threonine-protein kinase 1 (TSSK1B) from Homo sapiens (Human).